A 360-amino-acid polypeptide reads, in one-letter code: Histidinol-phosphate aminotransferase (360 aa).

Residue K223 is modified to N6-(pyridoxal phosphate)lysine.

This sequence belongs to the class-II pyridoxal-phosphate-dependent aminotransferase family. Histidinol-phosphate aminotransferase subfamily. Homodimer. Pyridoxal 5'-phosphate is required as a cofactor.

The catalysed reaction is L-histidinol phosphate + 2-oxoglutarate = 3-(imidazol-4-yl)-2-oxopropyl phosphate + L-glutamate. It functions in the pathway amino-acid biosynthesis; L-histidine biosynthesis; L-histidine from 5-phospho-alpha-D-ribose 1-diphosphate: step 7/9. The sequence is that of Histidinol-phosphate aminotransferase (hisC) from Bacillus subtilis (strain 168).